The chain runs to 726 residues: Disintegrin and metalloproteinase domain-containing protein 20 (726 aa).

The first 31 residues, methionine 1 to alanine 31, serve as a signal peptide directing secretion. Residues arginine 32–glutamine 206 constitute a propeptide that is removed on maturation. Residues methionine 171–glutamate 178 carry the Cysteine switch motif. Cysteine 173 contributes to the Zn(2+) binding site. Asparagine 191 and asparagine 226 each carry an N-linked (GlcNAc...) asparagine glycan. Residues arginine 207 to tyrosine 400 form the Peptidase M12B domain. Over arginine 207–tyrosine 693 the chain is Extracellular. Disulfide bonds link cysteine 317–cysteine 394, cysteine 357–cysteine 379, and cysteine 359–cysteine 364. Histidine 342 contacts Zn(2+). Glutamate 343 is an active-site residue. The Zn(2+) site is built by histidine 346 and histidine 352. N-linked (GlcNAc...) asparagine glycosylation is found at asparagine 378, asparagine 438, asparagine 479, and asparagine 587. One can recognise a Disintegrin domain in the interval leucine 407–aspartate 493. A disulfide bridge links cysteine 465 with cysteine 485. 3 disulfides stabilise this stretch: cysteine 635-cysteine 646, cysteine 640-cysteine 652, and cysteine 654-cysteine 663. One can recognise an EGF-like domain in the interval cysteine 635–cysteine 663. The chain crosses the membrane as a helical span at residues leucine 694–phenylalanine 714. At lysine 715–glycine 726 the chain is on the cytoplasmic side.

The cofactor is Zn(2+). Has no obvious cleavage site for furin endopeptidase, suggesting that the proteolytic processing is regulated. Testis specific.

It is found in the membrane. Its function is as follows. May be involved in sperm maturation and/or fertilization. The sequence is that of Disintegrin and metalloproteinase domain-containing protein 20 (ADAM20) from Homo sapiens (Human).